Here is a 270-residue protein sequence, read N- to C-terminus: Tetracenomycin polyketide synthesis O-methyltransferase TcmP (270 aa).

It functions in the pathway antibiotic biosynthesis; tetracenomycin C biosynthesis. O-methyltransferase that catalyzes the methylation of the C-9 carboxy group of tetracenomycin E (TCM E) to yield TCM A2. Catalyzes as well the following side reactions: methylation of 8-O-methyl-TCM D3 to 9-carboxymethyl-8-O-methyl-TCM D3; and of TCM B3 to 9-carboxymethyl-TCM B3. This Streptomyces glaucescens protein is Tetracenomycin polyketide synthesis O-methyltransferase TcmP (tcmP).